Reading from the N-terminus, the 156-residue chain is Crossover junction endodeoxyribonuclease RuvC (156 aa).

Residues Asp-7, Glu-66, and Asp-138 contribute to the active site. 3 residues coordinate Mg(2+): Asp-7, Glu-66, and Asp-138.

This sequence belongs to the RuvC family. As to quaternary structure, homodimer which binds Holliday junction (HJ) DNA. The HJ becomes 2-fold symmetrical on binding to RuvC with unstacked arms; it has a different conformation from HJ DNA in complex with RuvA. In the full resolvosome a probable DNA-RuvA(4)-RuvB(12)-RuvC(2) complex forms which resolves the HJ. Requires Mg(2+) as cofactor.

The protein localises to the cytoplasm. The catalysed reaction is Endonucleolytic cleavage at a junction such as a reciprocal single-stranded crossover between two homologous DNA duplexes (Holliday junction).. In terms of biological role, the RuvA-RuvB-RuvC complex processes Holliday junction (HJ) DNA during genetic recombination and DNA repair. Endonuclease that resolves HJ intermediates. Cleaves cruciform DNA by making single-stranded nicks across the HJ at symmetrical positions within the homologous arms, yielding a 5'-phosphate and a 3'-hydroxyl group; requires a central core of homology in the junction. The consensus cleavage sequence is 5'-(A/T)TT(C/G)-3'. Cleavage occurs on the 3'-side of the TT dinucleotide at the point of strand exchange. HJ branch migration catalyzed by RuvA-RuvB allows RuvC to scan DNA until it finds its consensus sequence, where it cleaves and resolves the cruciform DNA. This Ehrlichia chaffeensis (strain ATCC CRL-10679 / Arkansas) protein is Crossover junction endodeoxyribonuclease RuvC.